Reading from the N-terminus, the 466-residue chain is Adenosylhomocysteinase (466 aa).

Thr57, Asp132, and Glu192 together coordinate substrate. 193-195 (TTT) provides a ligand contact to NAD(+). Lys222 and Asp226 together coordinate substrate. NAD(+) contacts are provided by residues Asn227, 256–261 (GYGDVG), Glu279, Asn314, 335–337 (IGH), and Asn380.

It belongs to the adenosylhomocysteinase family. NAD(+) serves as cofactor.

It localises to the cytoplasm. The enzyme catalyses S-adenosyl-L-homocysteine + H2O = L-homocysteine + adenosine. It functions in the pathway amino-acid biosynthesis; L-homocysteine biosynthesis; L-homocysteine from S-adenosyl-L-homocysteine: step 1/1. Its function is as follows. May play a key role in the regulation of the intracellular concentration of adenosylhomocysteine. This Chromobacterium violaceum (strain ATCC 12472 / DSM 30191 / JCM 1249 / CCUG 213 / NBRC 12614 / NCIMB 9131 / NCTC 9757 / MK) protein is Adenosylhomocysteinase.